The chain runs to 568 residues: Urease subunit alpha (568 aa).

Residues 131-568 (GGMDAHIHFI…LPLAQRYFLY (438 aa)) form the Urease domain. Ni(2+)-binding residues include histidine 136, histidine 138, and lysine 219. Lysine 219 carries the N6-carboxylysine modification. Histidine 221 lines the substrate pocket. Ni(2+)-binding residues include histidine 248 and histidine 274. The active-site Proton donor is the histidine 322. Aspartate 362 provides a ligand contact to Ni(2+).

The protein belongs to the metallo-dependent hydrolases superfamily. Urease alpha subunit family. Heterotrimer of UreA (gamma), UreB (beta) and UreC (alpha) subunits. Three heterotrimers associate to form the active enzyme. Requires Ni cation as cofactor. Carboxylation allows a single lysine to coordinate two nickel ions.

The protein localises to the cytoplasm. It carries out the reaction urea + 2 H2O + H(+) = hydrogencarbonate + 2 NH4(+). It functions in the pathway nitrogen metabolism; urea degradation; CO(2) and NH(3) from urea (urease route): step 1/1. This Cereibacter sphaeroides (strain KD131 / KCTC 12085) (Rhodobacter sphaeroides) protein is Urease subunit alpha.